Here is a 1552-residue protein sequence, read N- to C-terminus: Nonribosomal peptide synthetase acrB (1552 aa).

The condensation stretch occupies residues 129 to 564 (ASFAQERIWF…PVANLAIFDE (436 aa)). The segment at 594 to 999 (RHCKAHPRDV…RMEGSAQVKI (406 aa)) is adenylation. Residues 1110–1186 (APLGVEEEVM…AMARLLQPQE (77 aa)) form the Carrier domain. An O-(pantetheine 4'-phosphoryl)serine modification is found at Ser1146. The tract at residues 1226–1464 (LTGATGFLGR…DFVGVDAVAS (239 aa)) is thiolester reductase (R) domain.

Belongs to the NRP synthetase family.

The protein operates within secondary metabolite biosynthesis. Nonribosomal peptide synthetase; part of the cluster that mediates the biosynthesis of acurin A, a highly reduced polyketide coupled to a serine via a peptide bond. The activities of the highly reducing polyketide synthase acrA and the nonribosomal peptide synthetase acrB are collectively responsible for the synthesis of the acurin A core structure with a heptaketide backbone produced by acrA covalently fused to a L-serine by acrB. After the formation of the PK-NRP hybrid product, it is detached from acrB by reductive release to set up the formation of the lactam ring by aldol condensation. The hydrolyase acrC then catalyzes water loss to generate a double bond in the ring. This double bond is probably reduced, which is followed by three oxidations at C-22 to generate the carboxylic acid moiety, involving probably the FAD-binding monooxygenase acrE and the cytochrome P450 monooxygenases acrD and acrF. Finally, a last methylation step performed by the O-methyltransferase acrG leads to the production of acurin A. This is Nonribosomal peptide synthetase acrB from Aspergillus aculeatus (strain ATCC 16872 / CBS 172.66 / WB 5094).